Here is a 250-residue protein sequence, read N- to C-terminus: PF03932 family protein CutC (250 aa).

This sequence belongs to the CutC family.

The protein resides in the cytoplasm. The sequence is that of PF03932 family protein CutC from Vibrio vulnificus (strain YJ016).